We begin with the raw amino-acid sequence, 538 residues long: Bifunctional purine biosynthesis protein PurH (538 aa).

The MGS-like domain maps to 6-158; sequence KHIPAPDLHR…KNHAYVATVV (153 aa).

It belongs to the PurH family.

The enzyme catalyses (6R)-10-formyltetrahydrofolate + 5-amino-1-(5-phospho-beta-D-ribosyl)imidazole-4-carboxamide = 5-formamido-1-(5-phospho-D-ribosyl)imidazole-4-carboxamide + (6S)-5,6,7,8-tetrahydrofolate. It catalyses the reaction IMP + H2O = 5-formamido-1-(5-phospho-D-ribosyl)imidazole-4-carboxamide. It participates in purine metabolism; IMP biosynthesis via de novo pathway; 5-formamido-1-(5-phospho-D-ribosyl)imidazole-4-carboxamide from 5-amino-1-(5-phospho-D-ribosyl)imidazole-4-carboxamide (10-formyl THF route): step 1/1. It functions in the pathway purine metabolism; IMP biosynthesis via de novo pathway; IMP from 5-formamido-1-(5-phospho-D-ribosyl)imidazole-4-carboxamide: step 1/1. This chain is Bifunctional purine biosynthesis protein PurH, found in Brucella ovis (strain ATCC 25840 / 63/290 / NCTC 10512).